The chain runs to 715 residues: 1,4-alpha-glucan branching enzyme GlgB (715 aa).

Asp-396 (nucleophile) is an active-site residue. Catalysis depends on Glu-449, which acts as the Proton donor.

This sequence belongs to the glycosyl hydrolase 13 family. GlgB subfamily. In terms of assembly, monomer.

The catalysed reaction is Transfers a segment of a (1-&gt;4)-alpha-D-glucan chain to a primary hydroxy group in a similar glucan chain.. It participates in glycan biosynthesis; glycogen biosynthesis. Its function is as follows. Catalyzes the formation of the alpha-1,6-glucosidic linkages in glycogen by scission of a 1,4-alpha-linked oligosaccharide from growing alpha-1,4-glucan chains and the subsequent attachment of the oligosaccharide to the alpha-1,6 position. In Vibrio vulnificus (strain YJ016), this protein is 1,4-alpha-glucan branching enzyme GlgB.